Reading from the N-terminus, the 82-residue chain is M-zodatoxin-Lt3b (82 aa).

Residues 1–22 form the signal peptide; it reads MKTYAVLLALVVAFVCIAESTG. Residues 23 to 61 constitute a propeptide that is removed on maturation; sequence YPVEDLEDDELTELEAEALLEDLLEDLELEDLDYNEEAR. Residues 58–61 carry the Processing quadruplet motif motif; it reads EEAR. The residue at position 81 (alanine 81) is an Alanine amide.

Cleavage of the propeptide depends on the processing quadruplet motif (XXXR, with at least one of X being E). As to expression, expressed by the venom gland.

The protein resides in the secreted. Its function is as follows. It has antimicrobial activity against Gram-positive bacteria (A.globiformis VKM Ac-1112 (MIC=0.7 uM), and B.subtilis VKM B-501 (MIC=2.9 uM)), Gram-negative bacteria (E.coli DH5-alpha (MIC=23 uM), E.coli MH1 (MIC=28 uM), and P.aeruginosa PAO1 (MIC&gt;45 uM)), and yeasts (P.pastoris GS115 (MIC=23 uM), and S.cerevisiae Y190 (MIC=23 uM)). Does not have hemolytic against rabbit erythrocytes. Causes paralysis, but is not lethal when injected into insect (M.domestica) larvae. This is M-zodatoxin-Lt3b from Lachesana tarabaevi (Spider).